A 125-amino-acid polypeptide reads, in one-letter code: MLKEFKEFIARGNVMDLAVGVIIGAAFTAIVKSLVSNLINPLIGIFLGKIDLSNLVFSIGSAHFRYGSFLNEVINFLIIAFVVFLMVKGINKVMPKKEEEAVKEGPSKEEEYLGQIVELLKKQDK.

3 helical membrane passes run 19 to 39, 42 to 62, and 67 to 87; these read VGVIIGAAFTAIVKSLVSNLI, LIGIFLGKIDLSNLVFSIGSA, and GSFLNEVINFLIIAFVVFLMV.

The protein belongs to the MscL family. As to quaternary structure, homopentamer.

Its subcellular location is the cell membrane. Functionally, channel that opens in response to stretch forces in the membrane lipid bilayer. May participate in the regulation of osmotic pressure changes within the cell. The chain is Large-conductance mechanosensitive channel from Limosilactobacillus fermentum (strain NBRC 3956 / LMG 18251) (Lactobacillus fermentum).